We begin with the raw amino-acid sequence, 315 residues long: 4-hydroxy-3-methylbut-2-enyl diphosphate reductase (315 aa).

Cys12 contributes to the [4Fe-4S] cluster binding site. Residues His41 and His74 each contribute to the (2E)-4-hydroxy-3-methylbut-2-enyl diphosphate site. The dimethylallyl diphosphate site is built by His41 and His74. Residues His41 and His74 each contribute to the isopentenyl diphosphate site. Cys96 contributes to the [4Fe-4S] cluster binding site. His124 is a binding site for (2E)-4-hydroxy-3-methylbut-2-enyl diphosphate. Residue His124 coordinates dimethylallyl diphosphate. His124 is a binding site for isopentenyl diphosphate. Catalysis depends on Glu126, which acts as the Proton donor. Residue Thr168 coordinates (2E)-4-hydroxy-3-methylbut-2-enyl diphosphate. Residue Cys198 coordinates [4Fe-4S] cluster. Positions 226, 227, 228, and 270 each coordinate (2E)-4-hydroxy-3-methylbut-2-enyl diphosphate. Positions 226, 227, 228, and 270 each coordinate dimethylallyl diphosphate. Positions 226, 227, 228, and 270 each coordinate isopentenyl diphosphate.

It belongs to the IspH family. [4Fe-4S] cluster is required as a cofactor.

It catalyses the reaction isopentenyl diphosphate + 2 oxidized [2Fe-2S]-[ferredoxin] + H2O = (2E)-4-hydroxy-3-methylbut-2-enyl diphosphate + 2 reduced [2Fe-2S]-[ferredoxin] + 2 H(+). The enzyme catalyses dimethylallyl diphosphate + 2 oxidized [2Fe-2S]-[ferredoxin] + H2O = (2E)-4-hydroxy-3-methylbut-2-enyl diphosphate + 2 reduced [2Fe-2S]-[ferredoxin] + 2 H(+). It functions in the pathway isoprenoid biosynthesis; dimethylallyl diphosphate biosynthesis; dimethylallyl diphosphate from (2E)-4-hydroxy-3-methylbutenyl diphosphate: step 1/1. The protein operates within isoprenoid biosynthesis; isopentenyl diphosphate biosynthesis via DXP pathway; isopentenyl diphosphate from 1-deoxy-D-xylulose 5-phosphate: step 6/6. Catalyzes the conversion of 1-hydroxy-2-methyl-2-(E)-butenyl 4-diphosphate (HMBPP) into a mixture of isopentenyl diphosphate (IPP) and dimethylallyl diphosphate (DMAPP). Acts in the terminal step of the DOXP/MEP pathway for isoprenoid precursor biosynthesis. The polypeptide is 4-hydroxy-3-methylbut-2-enyl diphosphate reductase (Pseudomonas fluorescens (strain ATCC BAA-477 / NRRL B-23932 / Pf-5)).